Reading from the N-terminus, the 102-residue chain is UPF0473 protein SERP1179 (102 aa).

Belongs to the UPF0473 family.

The sequence is that of UPF0473 protein SERP1179 from Staphylococcus epidermidis (strain ATCC 35984 / DSM 28319 / BCRC 17069 / CCUG 31568 / BM 3577 / RP62A).